The sequence spans 302 residues: Protein MGF 110-11L (302 aa).

The helical transmembrane segment at 26–46 threads the bilayer; the sequence is PFGCNMKGLGVLLGLFSLILA. A glycan (N-linked (GlcNAc...) asparagine; by host) is linked at asparagine 97. 2 consecutive transmembrane segments (helical) span residues 154–174 and 183–203; these read LTLKQYCLYFIISIAFAGCFV and LNTTIKLLTLLSILVYLAQPV. The N-linked (GlcNAc...) asparagine; by host glycan is linked to asparagine 294.

Belongs to the asfivirus MGF 110 family.

The protein localises to the host membrane. Its function is as follows. Plays a role in virus cell tropism, and may be required for efficient virus replication in macrophages. In African swine fever virus (isolate Tick/South Africa/Pretoriuskop Pr4/1996) (ASFV), this protein is Protein MGF 110-11L.